The following is a 476-amino-acid chain: Zinc finger CCCH domain-containing protein 6 (476 aa).

Low complexity predominate over residues 1 to 10 (MEQPHAAAAA). The segment at 1 to 57 (MEQPHAAAAAAGGGEGEGGASPDTGLEGPMWRMGLGGGGGGGGGGGGGDGDAAGRLP) is disordered. The segment covering 34–51 (GLGGGGGGGGGGGGGDGD) has biased composition (gly residues). C3H1-type zinc fingers lie at residues 59-87 (RPGE…HPRD), 108-136 (RAGQ…HPKQ), and 153-181 (RLGE…HPEF). Polar residues predominate over residues 290–301 (SSTGQSSNNQQE). Residues 290 to 309 (SSTGQSSNNQQEHGFPERPG) are disordered. 2 C3H1-type zinc fingers span residues 307-335 (RPGQ…HPRE) and 353-381 (RPGA…HPMG). The tract at residues 456–476 (TMMRAQTNTTSGGSSSPGGGR) is disordered.

It localises to the nucleus. This Oryza sativa subsp. japonica (Rice) protein is Zinc finger CCCH domain-containing protein 6.